Reading from the N-terminus, the 259-residue chain is uncharacterized protein (259 aa).

An HD domain is found at Gly51–Thr173.

This is an uncharacterized protein from Methanocaldococcus jannaschii (strain ATCC 43067 / DSM 2661 / JAL-1 / JCM 10045 / NBRC 100440) (Methanococcus jannaschii).